Here is a 173-residue protein sequence, read N- to C-terminus: Shikimate kinase 1 (173 aa).

ATP is bound at residue 14–19; the sequence is GAGKST. Ser-18 is a binding site for Mg(2+). Residues Asp-36, Arg-60, and Gly-82 each coordinate substrate. Position 120 (Arg-120) interacts with ATP. Residue Arg-140 participates in substrate binding. ATP is bound at residue Gln-157.

Belongs to the shikimate kinase family. In terms of assembly, monomer. The cofactor is Mg(2+).

It localises to the cytoplasm. The catalysed reaction is shikimate + ATP = 3-phosphoshikimate + ADP + H(+). The protein operates within metabolic intermediate biosynthesis; chorismate biosynthesis; chorismate from D-erythrose 4-phosphate and phosphoenolpyruvate: step 5/7. Catalyzes the specific phosphorylation of the 3-hydroxyl group of shikimic acid using ATP as a cosubstrate. The sequence is that of Shikimate kinase 1 from Sodalis glossinidius (strain morsitans).